A 2491-amino-acid polypeptide reads, in one-letter code: Cation-independent mannose-6-phosphate receptor (2491 aa).

Positions 1 to 40 are cleaved as a signal peptide; that stretch reads MGAAAGRSPHLGPAPARRPQRSLLLLQLLLLVAAPGSTQA. Topologically, residues 41–2304 are lumenal; that stretch reads QAAPFPELCS…MHKGLSERSQ (2264 aa). MRH domains lie at 47–163, 172–320, 326–468, 473–619, 625–762, 765–924, 932–1079, 1082–1219, 1225–1363, 1367–1508, 1514–1648, and 1650–1797; these read ELCS…ACKK, VPCY…ACHR, KTCS…ACVK, LLCG…ACVL, ENCT…ACPE, LECV…ACPI, QACS…ACVP, VDCQ…ACPV, DNCE…ACPP, TECS…ACPM, DDCQ…ACEQ, and TECS…VCPD. Cystine bridges form between Cys-49-Cys-69 and Cys-77-Cys-84. A glycan (N-linked (GlcNAc...) asparagine) is linked at Asn-112. Disulfide bonds link Cys-117/Cys-149, Cys-134/Cys-161, Cys-174/Cys-212, Cys-228/Cys-235, Cys-275/Cys-306, Cys-288/Cys-318, Cys-328/Cys-366, and Cys-374/Cys-382. N-linked (GlcNAc...) asparagine glycans are attached at residues Asn-400 and Asn-435. Intrachain disulfides connect Cys-420-Cys-454, Cys-434-Cys-466, Cys-475-Cys-519, and Cys-531-Cys-538. Asn-543 and Asn-581 each carry an N-linked (GlcNAc...) asparagine glycan. Cystine bridges form between Cys-572–Cys-605 and Cys-586–Cys-617. The N-linked (GlcNAc...) asparagine glycan is linked to Asn-626. Cystine bridges form between Cys-627-Cys-664, Cys-672-Cys-679, Cys-731-Cys-760, Cys-767-Cys-814, and Cys-823-Cys-830. A glycan (N-linked (GlcNAc...) asparagine) is linked at Asn-747. An N-linked (GlcNAc...) asparagine glycan is attached at Asn-871. Disulfide bonds link Cys-875–Cys-910, Cys-893–Cys-922, Cys-934–Cys-970, Cys-976–Cys-987, Cys-1042–Cys-1077, Cys-1084–Cys-1125, and Cys-1134–Cys-1142. Residues Asn-951 and Asn-957 are each glycosylated (N-linked (GlcNAc...) asparagine). Residue Asn-1164 is glycosylated (N-linked (GlcNAc...) asparagine). 4 cysteine pairs are disulfide-bonded: Cys-1177-Cys-1205, Cys-1190-Cys-1217, Cys-1227-Cys-1262, and Cys-1270-Cys-1282. A glycan (N-linked (GlcNAc...) asparagine) is linked at Asn-1246. The N-linked (GlcNAc...) asparagine glycan is linked to Asn-1312. 24 disulfides stabilise this stretch: Cys-1319/Cys-1349, Cys-1333/Cys-1361, Cys-1369/Cys-1408, Cys-1420/Cys-1427, Cys-1461/Cys-1494, Cys-1476/Cys-1506, Cys-1516/Cys-1553, Cys-1559/Cys-1566, Cys-1598/Cys-1634, Cys-1614/Cys-1646, Cys-1652/Cys-1695, Cys-1706/Cys-1713, Cys-1750/Cys-1783, Cys-1766/Cys-1795, Cys-1804/Cys-1839, Cys-1850/Cys-1856, Cys-1893/Cys-1975, Cys-1903/Cys-1927, Cys-1917/Cys-1942, Cys-1957/Cys-1987, Cys-1994/Cys-2029, Cys-2039/Cys-2046, Cys-2082/Cys-2113, and Cys-2096/Cys-2125. Asn-1656 carries N-linked (GlcNAc...) asparagine glycosylation. A glycan (N-linked (GlcNAc...) asparagine) is linked at Asn-1757. The Fibronectin type-II domain occupies 1802–1989; sequence DGCTLTDEQL…EWKTKVVCPP (188 aa). N-linked (GlcNAc...) asparagine glycosylation is present at Asn-1816. 2 consecutive MRH domains span residues 1992 to 2127 and 2135 to 2280; these read LECK…ACAV and VNGT…VCPL. N-linked (GlcNAc...) asparagine glycosylation is present at Asn-2085. Asn-2136 carries N-linked (GlcNAc...) asparagine glycosylation. 3 cysteine pairs are disulfide-bonded: Cys-2188-Cys-2194, Cys-2232-Cys-2266, and Cys-2248-Cys-2278. Residues 2305–2327 form a helical membrane-spanning segment; the sequence is AVGAVLSLLLVALTCCLLALLLY. Residues 2328–2491 are Cytoplasmic-facing; that stretch reads KKERRETVIS…DDSDEDLLHI (164 aa). Lys-2352 is subject to N6-acetyllysine. The residue at position 2409 (Ser-2409) is a Phosphoserine. The segment at 2424–2491 is disordered; the sequence is GRGAGAESSH…DDSDEDLLHI (68 aa). The residue at position 2425 (Arg-2425) is an Omega-N-methylarginine. Basic and acidic residues predominate over residues 2444–2459; it reads QEREDDRVGLVRGEKA. The span at 2464–2477 shows a compositional bias: polar residues; it reads SSSAQQKTVSSTKL. Phosphoserine occurs at positions 2479 and 2484. Positions 2479 to 2491 are enriched in basic and acidic residues; that stretch reads SFHDDSDEDLLHI.

It belongs to the MRL1/IGF2R family. Binds HA-I and HA-II plasma membrane adapters. Interacts with DPP4; the interaction is direct. Binds GGA1, GGA2 and GGA3. Interacts with the heterotrimeric retromer cargo-selective complex (CSC), formed by VPS26 (VPS26A or VPS26B), VPS29 and VPS35; which is involved in retrograde trafficking of the receptor from endosomes to the Golgi apparatus. Palmitoylated. Undergoes cysteine S-palmitoylation which promotes interaction with the retromer cargo-selective complex which mediates its retrograde trafficking to the Golgi apparatus.

It is found in the golgi apparatus membrane. The protein localises to the endosome membrane. In terms of biological role, mediates the transport of phosphorylated lysosomal enzymes from the Golgi complex and the cell surface to lysosomes. Lysosomal enzymes bearing phosphomannosyl residues bind specifically to mannose-6-phosphate receptors in the Golgi apparatus and the resulting receptor-ligand complex is transported to an acidic prelysosomal compartment where the low pH mediates the dissociation of the complex. The receptor is then recycled back to the Golgi for another round of trafficking through its binding to the retromer. This receptor also binds IGF2. Acts as a positive regulator of T-cell coactivation by binding DPP4. The chain is Cation-independent mannose-6-phosphate receptor (IGF2R) from Homo sapiens (Human).